A 661-amino-acid polypeptide reads, in one-letter code: Glycogen debranching enzyme (661 aa).

Residue aspartate 338 is the Nucleophile of the active site. The Proton donor role is filled by glutamate 373. A disordered region spans residues 460–481; the sequence is NQLNGEGNRDGSDRNFSNNHGV.

The protein belongs to the glycosyl hydrolase 13 family.

The enzyme catalyses Hydrolysis of (1-&gt;6)-alpha-D-glucosidic linkages to branches with degrees of polymerization of three or four glucose residues in limit dextrin.. Its pathway is glycan degradation; glycogen degradation. Its function is as follows. Removes maltotriose and maltotetraose chains that are attached by 1,6-alpha-linkage to the limit dextrin main chain, generating a debranched limit dextrin. This is Glycogen debranching enzyme from Serratia proteamaculans (strain 568).